We begin with the raw amino-acid sequence, 28 residues long: FDDLMLLLCCRQGPVCFIPLNEWPCSRM.

Contains 2 disulfide bonds. As to expression, expressed by the venom duct.

It is found in the secreted. The chain is Conotoxin Cl1.2 from Californiconus californicus (California cone).